A 251-amino-acid polypeptide reads, in one-letter code: RNA polymerase sigma factor SigI (251 aa).

A Polymerase core binding motif is present at residues 61–74; it reads DEFSIGLIAFNEAI. Positions 206 to 225 form a DNA-binding region, H-T-H motif; the sequence is VKQLEQLVSVSRKTIERNRK.

Belongs to the sigma-70 factor family. SigI subfamily. As to quaternary structure, interacts with RsgI.

It is found in the cytoplasm. With respect to regulation, negatively regulated by the anti-sigma-I factor RsgI. Upon exposure to heat, SigI is released from RsgI and activated. Transient heat activation of SigI may depend upon DnaK chaperone. Its function is as follows. Sigma factors are initiation factors that promote the attachment of RNA polymerase to specific initiation sites and are then released. This sigma factor is involved in regulation of cell wall metabolism in response to heat stress. Acts by regulating the expression of genes such as bcrC, mreBH and lytE. Also plays a role in survival at low temperatures. The chain is RNA polymerase sigma factor SigI from Bacillus subtilis (strain 168).